The following is a 955-amino-acid chain: UPF0182 protein tll1193 (955 aa).

Helical transmembrane passes span 6–26 (VVPLMPPWLRWLCGLVLAIAL), 53–73 (WSVQALLFLAVAGVSQLFYGC), 98–118 (GLGLWQLLLCAGSLNWLLIVA), 163–183 (WLLGLSLVAVILGLWLPVGLF), 186–206 (LGILLSLAMGAIASLSWPVVL), 240–260 (LWLVNLSVVGLGGTTLGYLLA), 280–300 (LQGLSAFVFATVALSFWLERY), 324–344 (LYGWLSASAFGVACLLAWSAI), and 354–374 (GPIAPGLFGFTLGYLGVILIV).

Belongs to the UPF0182 family.

It is found in the cell membrane. This Thermosynechococcus vestitus (strain NIES-2133 / IAM M-273 / BP-1) protein is UPF0182 protein tll1193.